Reading from the N-terminus, the 368-residue chain is Phosphoribosylaminoimidazole-succinocarboxamide synthase (368 aa).

It belongs to the SAICAR synthetase family.

It carries out the reaction 5-amino-1-(5-phospho-D-ribosyl)imidazole-4-carboxylate + L-aspartate + ATP = (2S)-2-[5-amino-1-(5-phospho-beta-D-ribosyl)imidazole-4-carboxamido]succinate + ADP + phosphate + 2 H(+). It participates in purine metabolism; IMP biosynthesis via de novo pathway; 5-amino-1-(5-phospho-D-ribosyl)imidazole-4-carboxamide from 5-amino-1-(5-phospho-D-ribosyl)imidazole-4-carboxylate: step 1/2. The chain is Phosphoribosylaminoimidazole-succinocarboxamide synthase from Vibrio cholerae serotype O1 (strain ATCC 39315 / El Tor Inaba N16961).